The primary structure comprises 247 residues: Chymase (247 aa).

A signal peptide spans methionine 1–alanine 19. A propeptide spans glycine 20–glutamate 21 (activation peptide). A Peptidase S1 domain is found at isoleucine 22–arginine 245. Cysteines 51 and 67 form a disulfide. Residue histidine 66 is the Charge relay system of the active site. N-linked (GlcNAc...) asparagine glycosylation occurs at asparagine 80. Residue aspartate 110 is the Charge relay system of the active site. Cystine bridges form between cysteine 144/cysteine 209 and cysteine 175/cysteine 188. Catalysis depends on serine 203, which acts as the Charge relay system.

This sequence belongs to the peptidase S1 family. Granzyme subfamily. In terms of tissue distribution, mast cells.

It is found in the secreted. It localises to the cytoplasmic granule. It carries out the reaction Preferential cleavage: Phe-|-Xaa &gt; Tyr-|-Xaa &gt; Trp-|-Xaa &gt; Leu-|-Xaa.. Functionally, major secreted protease of mast cells with suspected roles in vasoactive peptide generation, extracellular matrix degradation, and regulation of gland secretion. This is Chymase (Cma1) from Rattus norvegicus (Rat).